Here is a 134-residue protein sequence, read N- to C-terminus: Fluoride-specific ion channel FluC 3 (134 aa).

Helical transmembrane passes span L4 to L24, M35 to F55, M67 to V87, and I100 to I120. Na(+) contacts are provided by G74 and S77.

Belongs to the fluoride channel Fluc/FEX (TC 1.A.43) family.

It localises to the cell inner membrane. It carries out the reaction fluoride(in) = fluoride(out). With respect to regulation, na(+) is not transported, but it plays an essential structural role and its presence is essential for fluoride channel function. Functionally, fluoride-specific ion channel. Important for reducing fluoride concentration in the cell, thus reducing its toxicity. The protein is Fluoride-specific ion channel FluC 3 of Yersinia pseudotuberculosis serotype I (strain IP32953).